Here is a 920-residue protein sequence, read N- to C-terminus: Neurofibromin-A (920 aa).

Residues 63–291 (NKTLPLIKDL…EKMSAYFNLI (229 aa)) enclose the Ras-GAP domain. Disordered stretches follow at residues 344–405 (KWLA…TTTA) and 477–508 (LGPS…GASM). Residues 346 to 369 (LATTPSGNTPSPAISNASSAHNGK) show a composition bias toward polar residues. A compositionally biased stretch (low complexity) spans 370 to 405 (SNNTTNNNNNNNNNNNNNNNNNNNNNNNSNKTTTTA). The span at 498–507 (PTTSLQNGAS) shows a compositional bias: polar residues. The 162-residue stretch at 512-673 (FDECTHMLER…TSKDFITKSY (162 aa)) folds into the CRAL-TRIO domain.

In terms of biological role, regulator of the GTPase activity of Ras, mainly RasG and RasB. The protein is Neurofibromin-A (nfaA) of Dictyostelium discoideum (Social amoeba).